The primary structure comprises 64 residues: Prokaryotic ubiquitin-like protein Pup (64 aa).

2 stretches are compositionally biased toward basic and acidic residues: residues 1–11 and 25–34; these read MAQEQTKRTGG and GQERREKLAE. Positions 1–38 are disordered; sequence MAQEQTKRTGGGDEDEGSAGPEAAGQERREKLAEDTDD. An ARC ATPase binding region spans residues 21 to 58; the sequence is PEAAGQERREKLAEDTDDLLDEIDDVLEENAEDFVRAY. A coiled-coil region spans residues 24–52; it reads AGQERREKLAEDTDDLLDEIDDVLEENAE. Glutamine 64 is subject to Deamidated glutamine. Glutamine 64 participates in a covalent cross-link: Isoglutamyl lysine isopeptide (Gln-Lys) (interchain with K-? in acceptor proteins).

This sequence belongs to the prokaryotic ubiquitin-like protein family. As to quaternary structure, strongly interacts with the proteasome-associated ATPase ARC through a hydrophobic interface; the interacting region of Pup lies in its C-terminal half. There is one Pup binding site per ARC hexamer ring. In terms of processing, is modified by deamidation of its C-terminal glutamine to glutamate by the deamidase Dop, a prerequisite to the subsequent pupylation process.

Its pathway is protein degradation; proteasomal Pup-dependent pathway. Protein modifier that is covalently attached to lysine residues of substrate proteins, thereby targeting them for proteasomal degradation. The tagging system is termed pupylation. The protein is Prokaryotic ubiquitin-like protein Pup of Nocardia farcinica (strain IFM 10152).